The following is a 436-amino-acid chain: UDP-N-acetylmuramate--L-alanine ligase (436 aa).

108–114 (GAHGKTS) contributes to the ATP binding site.

It belongs to the MurCDEF family.

Its subcellular location is the cytoplasm. The catalysed reaction is UDP-N-acetyl-alpha-D-muramate + L-alanine + ATP = UDP-N-acetyl-alpha-D-muramoyl-L-alanine + ADP + phosphate + H(+). Its pathway is cell wall biogenesis; peptidoglycan biosynthesis. Its function is as follows. Cell wall formation. This chain is UDP-N-acetylmuramate--L-alanine ligase, found in Bacillus cereus (strain AH187).